A 484-amino-acid polypeptide reads, in one-letter code: Protein nucleotidyltransferase YdiU (484 aa).

8 residues coordinate ATP: G92, G94, R95, K115, D127, G128, R178, and R185. D258 serves as the catalytic Proton acceptor. Residues N259 and D268 each contribute to the Mg(2+) site. D268 provides a ligand contact to ATP.

It belongs to the SELO family. Mg(2+) is required as a cofactor. The cofactor is Mn(2+).

The catalysed reaction is L-seryl-[protein] + ATP = 3-O-(5'-adenylyl)-L-seryl-[protein] + diphosphate. It carries out the reaction L-threonyl-[protein] + ATP = 3-O-(5'-adenylyl)-L-threonyl-[protein] + diphosphate. It catalyses the reaction L-tyrosyl-[protein] + ATP = O-(5'-adenylyl)-L-tyrosyl-[protein] + diphosphate. The enzyme catalyses L-histidyl-[protein] + UTP = N(tele)-(5'-uridylyl)-L-histidyl-[protein] + diphosphate. The catalysed reaction is L-seryl-[protein] + UTP = O-(5'-uridylyl)-L-seryl-[protein] + diphosphate. It carries out the reaction L-tyrosyl-[protein] + UTP = O-(5'-uridylyl)-L-tyrosyl-[protein] + diphosphate. Its function is as follows. Nucleotidyltransferase involved in the post-translational modification of proteins. It can catalyze the addition of adenosine monophosphate (AMP) or uridine monophosphate (UMP) to a protein, resulting in modifications known as AMPylation and UMPylation. This is Protein nucleotidyltransferase YdiU from Mycolicibacterium smegmatis (strain ATCC 700084 / mc(2)155) (Mycobacterium smegmatis).